A 957-amino-acid polypeptide reads, in one-letter code: Collagen alpha-1(XXI) chain (957 aa).

Positions 1–22 are cleaved as a signal peptide; sequence MAHYITFLCMVLVLLLQNSVLA. Residues 37–211 form the VWFA domain; it reads DLVFILDGSY…KIREVMKQKL (175 aa). Asn-62 carries an N-linked (GlcNAc...) asparagine glycan. Positions 230-412 constitute a Laminin G-like domain; it reads GFDILLGLDV…VQKLRIYCDP (183 aa). 3 consecutive Collagen-like domains span residues 448–500, 501–542, and 543–594; these read PGKP…GARG, LPGY…GDKG, and SPGF…SPGA. Disordered stretches follow at residues 448 to 786 and 825 to 938; these read PGKP…KPGR and GSPG…ICDP. Low complexity-rich tracts occupy residues 451–462 and 471–481; these read PGLQGPKGDPGL and QPGQDGKPGYQ. Residues 507-517 are compositionally biased toward basic and acidic residues; sequence EPGRDGDKGDR. 2 stretches are compositionally biased toward low complexity: residues 618–637 and 705–729; these read QKGEIGPPGQQGKKGAPGMP and EKGIQGQKGENGRQGIPGQQGIQGH. 4 consecutive Collagen-like domains span residues 681–733, 734–787, 825–882, and 884–934; these read SPGE…HGAK, GERG…PGRE, GSPG…GSQG, and GYPG…GPPG. The span at 732–742 shows a compositional bias: basic and acidic residues; sequence AKGERGEKGEP. A compositionally biased stretch (pro residues) spans 829–838; it reads IPGPPGPIGP. The span at 839–874 shows a compositional bias: low complexity; sequence EGPRGLPGLPGRDGVPGLVGVPGRPGVRGLKGLPGR. Residues 889–900 show a composition bias toward pro residues; sequence QGPPGPPGPEGP.

Belongs to the fibril-associated collagens with interrupted helices (FACIT) family. Highly expressed in lymph node, jejunum, pancreas, stomach, trachea, testis, uterus and placenta; moderately expressed in brain, colon, lung, prostate, spinal cord, salivary gland and vascular smooth-muscle cells and very weakly expressed in heart, liver, kidney, bone marrow, spleen, thymus, skeletal muscle, adrenal gland and peripheral leukocytes. Expression in heart was higher in the right ventricle and atrium than in the left ventricle and atrium.

The protein localises to the secreted. The protein resides in the extracellular space. It localises to the extracellular matrix. Its subcellular location is the cytoplasm. This chain is Collagen alpha-1(XXI) chain (COL21A1), found in Homo sapiens (Human).